A 470-amino-acid polypeptide reads, in one-letter code: MGKLHSKPAAVCKRRESPEGDSFAVSAAWARKGIEEWIGRQRCPGGVSGPRQLRLAGTIGRSTRELVGDVLRDTLSEEEEDDFRLEVALPPEKTDGLGSGDEKKMERVSEPCPGSKKQLKFEELQCDVSMEEDSRQEWTFTLYDFDNNGKVTREDITSLLHTIYEVVDSSVNHSPTSSKMLRVKLTVAPDGSQSKRSVLVNQADLQSARPRAETKPTEDLRSWEKKQRAPLRFQGDSRLEQSGCYHHCVDENIERRNHYLDLAGIENYTSQFGPGSPSVAQKSELPPRTSNPTRSRSHEPEAIHIPHRKPQGVDPASFHFLDTPIAKVSELQQRLRGTQDGSKHFVRSPKAQGKSVGVGHVARGARNKPPLGPAIPAVSPSAHLAASPALLPSLAPLGHKKHKHRAKESQQGCRGLQAPLASGGPVLGREHLRELPALVVYESQAGQPVQRHEHHHHHEHHHHYHHFYQT.

Disordered regions lie at residues 1 to 21 (MGKLHSKPAAVCKRRESPEGD) and 90 to 114 (PPEKTDGLGSGDEKKMERVSEPCPG). A lipid anchor (N-myristoyl glycine) is attached at Gly2. The segment covering 92 to 109 (EKTDGLGSGDEKKMERVS) has biased composition (basic and acidic residues). The interval 125–190 (QCDVSMEEDS…LRVKLTVAPD (66 aa)) is interaction with DVL1, DVL2 and DVL3. Residues 131–166 (EEDSRQEWTFTLYDFDNNGKVTREDITSLLHTIYEV) form the EF-hand domain. Positions 144, 146, 148, 150, and 155 each coordinate Ca(2+). A compositionally biased stretch (polar residues) spans 192-205 (SQSKRSVLVNQADL). Disordered stretches follow at residues 192–228 (SQSKRSVLVNQADLQSARPRAETKPTEDLRSWEKKQR), 271–314 (QFGP…QGVD), 337–357 (GTQDGSKHFVRSPKAQGKSVG), and 446–470 (GQPVQRHEHHHHHEHHHHYHHFYQT). The segment covering 210–227 (PRAETKPTEDLRSWEKKQ) has biased composition (basic and acidic residues). Over residues 271 to 281 (QFGPGSPSVAQ) the composition is skewed to polar residues. Residues 452 to 470 (HEHHHHHEHHHHYHHFYQT) show a composition bias toward basic residues.

The protein belongs to the NKD family. Interacts with DVL1, DVL2, DVL3 and PPP2R3A. As to expression, expressed in colon, heart, kidney, leukocyte, liver, lung, ovary, pancreas, placenta, prostate, skeletal muscle, small intestine and spleen.

The protein resides in the cell membrane. It localises to the cytoplasm. Functionally, cell autonomous antagonist of the canonical Wnt signaling pathway. May activate a second Wnt signaling pathway that controls planar cell polarity. The sequence is that of Protein naked cuticle homolog 1 (NKD1) from Homo sapiens (Human).